The sequence spans 245 residues: Biosynthetic peptidoglycan transglycosylase (245 aa).

A helical membrane pass occupies residues 24–44; the sequence is LVVIGAWLAGILLFSFLPVPF.

This sequence belongs to the glycosyltransferase 51 family.

The protein localises to the cell inner membrane. It catalyses the reaction [GlcNAc-(1-&gt;4)-Mur2Ac(oyl-L-Ala-gamma-D-Glu-L-Lys-D-Ala-D-Ala)](n)-di-trans,octa-cis-undecaprenyl diphosphate + beta-D-GlcNAc-(1-&gt;4)-Mur2Ac(oyl-L-Ala-gamma-D-Glu-L-Lys-D-Ala-D-Ala)-di-trans,octa-cis-undecaprenyl diphosphate = [GlcNAc-(1-&gt;4)-Mur2Ac(oyl-L-Ala-gamma-D-Glu-L-Lys-D-Ala-D-Ala)](n+1)-di-trans,octa-cis-undecaprenyl diphosphate + di-trans,octa-cis-undecaprenyl diphosphate + H(+). Its pathway is cell wall biogenesis; peptidoglycan biosynthesis. In terms of biological role, peptidoglycan polymerase that catalyzes glycan chain elongation from lipid-linked precursors. This chain is Biosynthetic peptidoglycan transglycosylase, found in Pectobacterium atrosepticum (strain SCRI 1043 / ATCC BAA-672) (Erwinia carotovora subsp. atroseptica).